The following is a 355-amino-acid chain: MEANSNSAVPLCTPYKLGRFKLTHRIVFPALTRNRSQNNTPQSHLTEYYSQRATNGGLIISEAAAASDISKECPNLPGIWNEEQVEAWKPVVNGVHEKGGVFFCQIWHSGRLSVPTVSALFFSIGIGWSTRPDDKVYAKPTPLPLESDKIPCIVNDFRIAARNAIKAGFDGIEINASSGGYLIDEFMNDQVHGWTDEYDESIKDRCRLALEIVEAVANEIGADKIGIKLSPFDGKKDSNSEALATYMANELSKLGVLYLHVMEPRETVNRSLLPIRKAFKGTLIASGGYGKSDGEKAIDENYADLISFGRMFLANPDLPKRFEVNAPLNKYNRSTFYTNDPIIGYTDYPFLEVAS.

Residues 30 to 32, Ala63, and Gln105 each bind FMN; that span reads ALT. 175 to 178 serves as a coordination point for substrate; sequence NASS. Tyr181 acts as the Proton donor in catalysis. Arg265 contacts substrate. FMN-binding positions include Gly288 and 309–310; that span reads GR.

This sequence belongs to the NADH:flavin oxidoreductase/NADH oxidase family. It depends on FMN as a cofactor. As to expression, weakly expressed in flowers and roots.

The protein resides in the cytoplasm. In terms of biological role, may be involved in the biosynthesis or metabolism of oxylipin signaling molecules. In Solanum lycopersicum (Tomato), this protein is 12-oxophytodienoate reductase-like protein (OPR2).